Consider the following 505-residue polypeptide: Histidine ammonia-lyase (505 aa).

The 5-imidazolinone (Ala-Gly) cross-link spans 141 to 143; sequence ASG. The residue at position 142 (S142) is a 2,3-didehydroalanine (Ser).

The protein belongs to the PAL/histidase family. Post-translationally, contains an active site 4-methylidene-imidazol-5-one (MIO), which is formed autocatalytically by cyclization and dehydration of residues Ala-Ser-Gly.

It localises to the cytoplasm. The catalysed reaction is L-histidine = trans-urocanate + NH4(+). It participates in amino-acid degradation; L-histidine degradation into L-glutamate; N-formimidoyl-L-glutamate from L-histidine: step 1/3. The polypeptide is Histidine ammonia-lyase (Bacillus cereus (strain ZK / E33L)).